Here is a 122-residue protein sequence, read N- to C-terminus: MKVFLSGSIRGGRQMLPTYQFICRFLRNKGHEVLSWHVADSEVEGKESLLTETQIYERDMSFLQDSECMIAEVSMPSIGVGYEVCSAIKKGIPVMCVHMPDSNVSAMLLGNTYADISVRLWG.

Residues 4–10, tyrosine 19, histidine 37, glutamate 83, and 105–107 contribute to the substrate site; these read FLSGSIR and SAM.

It belongs to the 2'-deoxynucleoside 5'-phosphate N-hydrolase 1 family. Monomer and homodimer.

It carries out the reaction a pyrimidine 2'-deoxyribonucleoside 5'-phosphate + H2O = a pyrimidine nucleobase + 2-deoxy-D-ribose 5-phosphate. It catalyses the reaction a purine 2'-deoxyribonucleoside 5'-phosphate + H2O = a purine nucleobase + 2-deoxy-D-ribose 5-phosphate. Catalyzes the cleavage of the N-glycosidic bond of deoxyribonucleoside 5'-monophosphates to yield deoxyribose 5-phosphate and a purine or pyrimidine base. The protein is Putative 2'-deoxynucleoside 5'-phosphate N-hydrolase 1 of Methanococcoides burtonii (strain DSM 6242 / NBRC 107633 / OCM 468 / ACE-M).